Here is a 515-residue protein sequence, read N- to C-terminus: 13S globulin seed storage protein (515 aa).

The first 22 residues, 1-22 (MSTKLILSFSLCLMVLSCSAQA), serve as a signal peptide directing secretion. The interval 23-96 (AQLWPWRKGQ…RYVIQPGGLL (74 aa)) is igE-binding epitope. 2 disulfides stabilise this stretch: cysteine 47–cysteine 80 and cysteine 123–cysteine 327. The 221-residue stretch at 52–272 (LTASEPSRRV…FRDVDRETIS (221 aa)) folds into the Cupin type-1 1 domain. An igE-binding epitope with a very strong IgE-binding activity region spans residues 97–172 (LPSYSNAPYI…REGDVIPSPA (76 aa)). 3 disordered regions span residues 123–156 (CPET…GDQH), 210–241 (LAGQ…ESDD), and 295–320 (PEDS…GRSN). 3 stretches are compositionally biased toward basic and acidic residues: residues 141 to 156 (HSRE…GDQH), 217 to 239 (GREE…SRES), and 295 to 316 (PEDS…ERGS). IgE-binding epitope regions lie at residues 173-248 (GVVQ…LIGA) and 249-320 (NILS…GRSN). The region spanning 333-482 (QNVNRPSHAD…SYDISTEEAY (150 aa)) is the Cupin type-1 2 domain. Residues 347–387 (RAGRINTVNSNNLPILEFLQLSAQHVVLYKNAIIGPRWNLN) form an igE-binding epitope with a strong IgE-binding activity region. 3 igE-binding epitope regions span residues 407-457 (EGKS…PIAG), 440-476 (EWVE…SYDI), and 475-511 (DIST…ERER).

It belongs to the 11S seed storage protein (globulins) family. In terms of assembly, homohexamer. Post-translationally, proteolytically processed from a single precursor to produce an acidic and a basic chain that are linked by a disulfide bond. As to expression, expressed in seeds (at protein level).

Seed storage protein. The chain is 13S globulin seed storage protein from Fagopyrum tataricum (Tartarian buckwheat).